The following is a 546-amino-acid chain: Chaperonin GroEL (546 aa).

ATP is bound by residues 30-33, lysine 51, 87-91, glycine 415, and aspartate 495; these read TLGP and DGTTT.

The protein belongs to the chaperonin (HSP60) family. Forms a cylinder of 14 subunits composed of two heptameric rings stacked back-to-back. Interacts with the co-chaperonin GroES.

The protein localises to the cytoplasm. It carries out the reaction ATP + H2O + a folded polypeptide = ADP + phosphate + an unfolded polypeptide.. Its function is as follows. Together with its co-chaperonin GroES, plays an essential role in assisting protein folding. The GroEL-GroES system forms a nano-cage that allows encapsulation of the non-native substrate proteins and provides a physical environment optimized to promote and accelerate protein folding. The polypeptide is Chaperonin GroEL (Brucella melitensis biotype 2 (strain ATCC 23457)).